The primary structure comprises 281 residues: Undecaprenyl-diphosphatase (281 aa).

8 consecutive transmembrane segments (helical) span residues 4-24 (IEIL…WLPI), 45-65 (AFMS…VMVI), 89-109 (WLKV…DDWF), 113-133 (FHNM…FIYL), 152-172 (LPYT…LPGT), 190-210 (SVVT…ASAL), 225-245 (GQLF…MVAI), and 257-277 (FTLF…YSFV).

The protein belongs to the UppP family.

It is found in the cell membrane. The catalysed reaction is di-trans,octa-cis-undecaprenyl diphosphate + H2O = di-trans,octa-cis-undecaprenyl phosphate + phosphate + H(+). Catalyzes the dephosphorylation of undecaprenyl diphosphate (UPP). Confers resistance to bacitracin. The sequence is that of Undecaprenyl-diphosphatase from Streptococcus pneumoniae (strain Hungary19A-6).